The sequence spans 220 residues: Nucleolar protein 12 (220 aa).

A coiled-coil region spans residues 31 to 86 (HKRKMQRRKTAVEEIKRKIKEEQKKMKEERHKEYMKMLKEREEALCELEENDELEE). Residues 109-220 (ISDLDLSGIR…QTGKTRRRRN (112 aa)) are disordered. Over residues 139–148 (EKGADEEKPK) the composition is skewed to basic and acidic residues. Basic residues-rich tracts occupy residues 176–186 (RSQRKSGKRPS) and 205–220 (KTQR…RRRN).

This sequence belongs to the RRP17 family.

It is found in the nucleus. It localises to the nucleolus. Its function is as follows. May bind to rRNA. The chain is Nucleolar protein 12 (nol12) from Xenopus laevis (African clawed frog).